Reading from the N-terminus, the 86-residue chain is Large ribosomal subunit protein bL27 (86 aa).

Residues 1–20 (MAHKKAGGSSRNGRDSESKR) form a disordered region.

It belongs to the bacterial ribosomal protein bL27 family.

In Paraburkholderia phymatum (strain DSM 17167 / CIP 108236 / LMG 21445 / STM815) (Burkholderia phymatum), this protein is Large ribosomal subunit protein bL27.